The chain runs to 631 residues: Glutamine--fructose-6-phosphate aminotransferase [isomerizing] (631 aa).

Cys-2 (nucleophile; for GATase activity) is an active-site residue. Positions 2–225 (CGIVGYIGTQ…NGEIARLTPL (224 aa)) constitute a Glutamine amidotransferase type-2 domain. SIS domains are found at residues 298–446 (LDPQ…QRHS) and 480–621 (LAHE…VDQP). Lys-626 serves as the catalytic For Fru-6P isomerization activity.

As to quaternary structure, homodimer.

It is found in the cytoplasm. The catalysed reaction is D-fructose 6-phosphate + L-glutamine = D-glucosamine 6-phosphate + L-glutamate. In terms of biological role, catalyzes the first step in hexosamine metabolism, converting fructose-6P into glucosamine-6P using glutamine as a nitrogen source. This chain is Glutamine--fructose-6-phosphate aminotransferase [isomerizing], found in Synechocystis sp. (strain ATCC 27184 / PCC 6803 / Kazusa).